A 144-amino-acid chain; its full sequence is Large ribosomal subunit protein uL15 (144 aa).

Residues 1 to 49 (MRLNTLSPAAGAKSAAKRVGRGIGSGLGKTAGRGHKGQKSRSGGGVRVG) are disordered. Over residues 21-31 (RGIGSGLGKTA) the composition is skewed to gly residues.

The protein belongs to the universal ribosomal protein uL15 family. Part of the 50S ribosomal subunit.

In terms of biological role, binds to the 23S rRNA. This is Large ribosomal subunit protein uL15 from Shewanella piezotolerans (strain WP3 / JCM 13877).